The following is a 93-amino-acid chain: Small ribosomal subunit protein uS19 (93 aa).

It belongs to the universal ribosomal protein uS19 family.

In terms of biological role, protein S19 forms a complex with S13 that binds strongly to the 16S ribosomal RNA. The protein is Small ribosomal subunit protein uS19 of Salinispora tropica (strain ATCC BAA-916 / DSM 44818 / JCM 13857 / NBRC 105044 / CNB-440).